Consider the following 109-residue polypeptide: Small ribosomal subunit protein bS6 (109 aa).

It belongs to the bacterial ribosomal protein bS6 family.

Functionally, binds together with bS18 to 16S ribosomal RNA. This chain is Small ribosomal subunit protein bS6, found in Dehalococcoides mccartyi (strain CBDB1).